Here is a 489-residue protein sequence, read N- to C-terminus: UDP-N-acetylmuramoylalanine--D-glutamate ligase (489 aa).

An ATP-binding site is contributed by 126 to 132 (GTNGKTT).

This sequence belongs to the MurCDEF family.

It localises to the cytoplasm. It carries out the reaction UDP-N-acetyl-alpha-D-muramoyl-L-alanine + D-glutamate + ATP = UDP-N-acetyl-alpha-D-muramoyl-L-alanyl-D-glutamate + ADP + phosphate + H(+). It functions in the pathway cell wall biogenesis; peptidoglycan biosynthesis. Cell wall formation. Catalyzes the addition of glutamate to the nucleotide precursor UDP-N-acetylmuramoyl-L-alanine (UMA). The protein is UDP-N-acetylmuramoylalanine--D-glutamate ligase of Mycolicibacterium paratuberculosis (strain ATCC BAA-968 / K-10) (Mycobacterium paratuberculosis).